We begin with the raw amino-acid sequence, 275 residues long: NH(3)-dependent NAD(+) synthetase (275 aa).

An ATP-binding site is contributed by 46–53; sequence GISGGQDS. Asp52 serves as a coordination point for Mg(2+). Residue Arg140 participates in deamido-NAD(+) binding. Thr160 lines the ATP pocket. A Mg(2+)-binding site is contributed by Glu165. Deamido-NAD(+)-binding residues include Lys173 and Asp180. The ATP site is built by Lys189 and Thr211. Position 260 to 261 (260 to 261) interacts with deamido-NAD(+); that stretch reads HK.

This sequence belongs to the NAD synthetase family. As to quaternary structure, homodimer.

The enzyme catalyses deamido-NAD(+) + NH4(+) + ATP = AMP + diphosphate + NAD(+) + H(+). The protein operates within cofactor biosynthesis; NAD(+) biosynthesis; NAD(+) from deamido-NAD(+) (ammonia route): step 1/1. Functionally, catalyzes the ATP-dependent amidation of deamido-NAD to form NAD. Uses ammonia as a nitrogen source. The sequence is that of NH(3)-dependent NAD(+) synthetase from Enterobacter sp. (strain 638).